The chain runs to 172 residues: Conglutin-7 (172 aa).

The signal sequence occupies residues 1-21; the sequence is MAKLTILVALALFLLAAHASA. Disulfide bonds link C33/C116, C45/C103, C104/C152, and C118/C160. A disordered region spans residues 54–98; it reads QRDEDSYGRDPYSPSQDPYSPSQDPDRRDPYSPSPYDRRGAGSSQ. The segment covering 62–76 has biased composition (low complexity); sequence RDPYSPSQDPYSPSQ. A 4-hydroxyproline mark is found at P67, P74, and P86. Over residues 77 to 98 the composition is skewed to basic and acidic residues; sequence DPDRRDPYSPSPYDRRGAGSSQ.

It belongs to the 2S seed storage albumins family. The hydroxyproline modifications determined by mass spectrometry are probably 4-hydroxyproline as determined for other extracellular plant proteins. Expressed in seeds, not expressed in leaves, roots and pegs.

Functionally, weak inhibitor of trypsin. The polypeptide is Conglutin-7 (Arachis hypogaea (Peanut)).